The sequence spans 304 residues: MPETALLEEVVDRVRPLLGQGKVANYIPALANIDPGKLGIAVTTIDGETIGAGDYLEPFSIQSISKVFSLTLALTLYEETEIWSRVGKEPSGHSFNSLVQVELERGKPRNPFINAGALVIADLLQSRLGAPKHRMLELVRALSQNDKVCFDKQVADSEYQHSARNAAIAYLMKSFGNFQGDVDTVLRTYFHYCALKMNCADLSKAMLYLANRGKTLDGTELISQVQTRQLNALLATSGLYDGAGEFAYRVGMPGKSGVGGGIIAVIPGELSVCVWSPELDTQGNSLAGTAMLEQLSQRLGRSIF.

S63, N114, E158, N165, Y189, Y240, and V258 together coordinate substrate.

This sequence belongs to the glutaminase family. Homotetramer.

The catalysed reaction is L-glutamine + H2O = L-glutamate + NH4(+). The chain is Glutaminase from Shewanella oneidensis (strain ATCC 700550 / JCM 31522 / CIP 106686 / LMG 19005 / NCIMB 14063 / MR-1).